Consider the following 298-residue polypeptide: Tyrosine recombinase XerD (298 aa).

In terms of domain architecture, Core-binding (CB) spans 2-87 (KQELARIEQF…AVRRLFQYLY (86 aa)). The region spanning 108–292 (RLPKDLSEAQ…ATERLRQLHQ (185 aa)) is the Tyr recombinase domain. Active-site residues include Arg148, Lys172, His244, Arg247, and His270. Tyr279 (O-(3'-phospho-DNA)-tyrosine intermediate) is an active-site residue.

This sequence belongs to the 'phage' integrase family. XerD subfamily. As to quaternary structure, forms a cyclic heterotetrameric complex composed of two molecules of XerC and two molecules of XerD, in which XerC interacts with XerD via its C-terminal region, XerD interacts with XerC via its C-terminal region and so on.

It is found in the cytoplasm. FtsK may regulate the catalytic switch between XerC and XerD in the heterotetrameric complex during the two steps of the recombination process. Functionally, site-specific tyrosine recombinase, which acts by catalyzing the cutting and rejoining of the recombining DNA molecules. Binds cooperatively to specific DNA consensus sequences that are separated from XerC binding sites by a short central region, forming the heterotetrameric XerC-XerD complex that recombines DNA substrates. The complex is essential to convert dimers of the bacterial chromosome into monomers to permit their segregation at cell division. It also contributes to the segregational stability of plasmids. In the complex XerD specifically exchanges the bottom DNA strands. The protein is Tyrosine recombinase XerD of Shigella flexneri.